The chain runs to 424 residues: Enolase (424 aa).

Glutamine 162 provides a ligand contact to (2R)-2-phosphoglycerate. The active-site Proton donor is glutamate 204. Residues aspartate 241, glutamate 284, and aspartate 311 each contribute to the Mg(2+) site. Lysine 336, arginine 365, serine 366, and lysine 387 together coordinate (2R)-2-phosphoglycerate. Lysine 336 (proton acceptor) is an active-site residue.

This sequence belongs to the enolase family. Requires Mg(2+) as cofactor.

It is found in the cytoplasm. The protein resides in the secreted. It localises to the cell surface. The enzyme catalyses (2R)-2-phosphoglycerate = phosphoenolpyruvate + H2O. Its pathway is carbohydrate degradation; glycolysis; pyruvate from D-glyceraldehyde 3-phosphate: step 4/5. Its function is as follows. Catalyzes the reversible conversion of 2-phosphoglycerate (2-PG) into phosphoenolpyruvate (PEP). It is essential for the degradation of carbohydrates via glycolysis. This is Enolase from Rhizobium meliloti (strain 1021) (Ensifer meliloti).